A 420-amino-acid chain; its full sequence is Probable serine hydroxymethyltransferase (420 aa).

(6S)-5,6,7,8-tetrahydrofolate contacts are provided by residues Leu-121 and 125–127 (GHL). Lys-230 bears the N6-(pyridoxal phosphate)lysine mark. (6S)-5,6,7,8-tetrahydrofolate contacts are provided by residues Glu-246 and 354-356 (SPF).

The protein belongs to the SHMT family. In terms of assembly, homodimer. Pyridoxal 5'-phosphate is required as a cofactor.

The protein resides in the cytoplasm. It catalyses the reaction (6R)-5,10-methylene-5,6,7,8-tetrahydrofolate + glycine + H2O = (6S)-5,6,7,8-tetrahydrofolate + L-serine. It functions in the pathway one-carbon metabolism; tetrahydrofolate interconversion. Its function is as follows. Catalyzes the reversible interconversion of serine and glycine with tetrahydrofolate (THF) serving as the one-carbon carrier. This reaction serves as the major source of one-carbon groups required for the biosynthesis of purines, thymidylate, methionine, and other important biomolecules. The sequence is that of Probable serine hydroxymethyltransferase from Rickettsia bellii (strain RML369-C).